The sequence spans 384 residues: Acetylornithine aminotransferase (384 aa).

Pyridoxal 5'-phosphate-binding positions include 94 to 95 (GT) and F121. R124 contributes to the N(2)-acetyl-L-ornithine binding site. 206–209 (DEVQ) serves as a coordination point for pyridoxal 5'-phosphate. K235 is modified (N6-(pyridoxal phosphate)lysine). N(2)-acetyl-L-ornithine is bound at residue S263. T264 provides a ligand contact to pyridoxal 5'-phosphate.

The protein belongs to the class-III pyridoxal-phosphate-dependent aminotransferase family. ArgD subfamily. In terms of assembly, homodimer. Pyridoxal 5'-phosphate serves as cofactor.

The protein localises to the cytoplasm. The catalysed reaction is N(2)-acetyl-L-ornithine + 2-oxoglutarate = N-acetyl-L-glutamate 5-semialdehyde + L-glutamate. The protein operates within amino-acid biosynthesis; L-arginine biosynthesis; N(2)-acetyl-L-ornithine from L-glutamate: step 4/4. The polypeptide is Acetylornithine aminotransferase (Listeria innocua serovar 6a (strain ATCC BAA-680 / CLIP 11262)).